The chain runs to 556 residues: Dihydroxy-acid dehydratase (556 aa).

Residue Cys-47 coordinates [2Fe-2S] cluster. Asp-79 provides a ligand contact to Mg(2+). Cys-120 lines the [2Fe-2S] cluster pocket. 2 residues coordinate Mg(2+): Asp-121 and Lys-122. N6-carboxylysine is present on Lys-122. Cys-192 provides a ligand contact to [2Fe-2S] cluster. Glu-444 provides a ligand contact to Mg(2+). Ser-470 acts as the Proton acceptor in catalysis.

Belongs to the IlvD/Edd family. As to quaternary structure, homodimer. Requires [2Fe-2S] cluster as cofactor. Mg(2+) serves as cofactor.

It catalyses the reaction (2R)-2,3-dihydroxy-3-methylbutanoate = 3-methyl-2-oxobutanoate + H2O. It carries out the reaction (2R,3R)-2,3-dihydroxy-3-methylpentanoate = (S)-3-methyl-2-oxopentanoate + H2O. It functions in the pathway amino-acid biosynthesis; L-isoleucine biosynthesis; L-isoleucine from 2-oxobutanoate: step 3/4. Its pathway is amino-acid biosynthesis; L-valine biosynthesis; L-valine from pyruvate: step 3/4. In terms of biological role, functions in the biosynthesis of branched-chain amino acids. Catalyzes the dehydration of (2R,3R)-2,3-dihydroxy-3-methylpentanoate (2,3-dihydroxy-3-methylvalerate) into 2-oxo-3-methylpentanoate (2-oxo-3-methylvalerate) and of (2R)-2,3-dihydroxy-3-methylbutanoate (2,3-dihydroxyisovalerate) into 2-oxo-3-methylbutanoate (2-oxoisovalerate), the penultimate precursor to L-isoleucine and L-valine, respectively. The protein is Dihydroxy-acid dehydratase of Prochlorococcus marinus (strain MIT 9303).